Consider the following 227-residue polypeptide: Cytochrome c oxidase subunit 2 (227 aa).

Over 1–14 the chain is Mitochondrial intermembrane; the sequence is MAHAAQMGLQDATS. The helical transmembrane segment at 15-45 threads the bilayer; sequence PIMEELISFHDHALMIIFLISFLVLYALFLT. The Mitochondrial matrix portion of the chain corresponds to 46–59; it reads LTTKLTNTNITDAQ. Residues 60–87 form a helical membrane-spanning segment; sequence EMETVWTILPAIILVLIALPSLRILYLT. At 88–227 the chain is on the mitochondrial intermembrane side; the sequence is DEINDPSFTI…IFEMGPVFTL (140 aa). Residues His161, Cys196, Glu198, Cys200, His204, and Met207 each contribute to the Cu cation site. Glu198 contributes to the Mg(2+) binding site.

This sequence belongs to the cytochrome c oxidase subunit 2 family. In terms of assembly, component of the cytochrome c oxidase (complex IV, CIV), a multisubunit enzyme composed of 14 subunits. The complex is composed of a catalytic core of 3 subunits MT-CO1, MT-CO2 and MT-CO3, encoded in the mitochondrial DNA, and 11 supernumerary subunits COX4I, COX5A, COX5B, COX6A, COX6B, COX6C, COX7A, COX7B, COX7C, COX8 and NDUFA4, which are encoded in the nuclear genome. The complex exists as a monomer or a dimer and forms supercomplexes (SCs) in the inner mitochondrial membrane with NADH-ubiquinone oxidoreductase (complex I, CI) and ubiquinol-cytochrome c oxidoreductase (cytochrome b-c1 complex, complex III, CIII), resulting in different assemblies (supercomplex SCI(1)III(2)IV(1) and megacomplex MCI(2)III(2)IV(2)). Found in a complex with TMEM177, COA6, COX18, COX20, SCO1 and SCO2. Interacts with TMEM177 in a COX20-dependent manner. Interacts with COX20. Interacts with COX16. The cofactor is Cu cation.

The protein localises to the mitochondrion inner membrane. The catalysed reaction is 4 Fe(II)-[cytochrome c] + O2 + 8 H(+)(in) = 4 Fe(III)-[cytochrome c] + 2 H2O + 4 H(+)(out). Its function is as follows. Component of the cytochrome c oxidase, the last enzyme in the mitochondrial electron transport chain which drives oxidative phosphorylation. The respiratory chain contains 3 multisubunit complexes succinate dehydrogenase (complex II, CII), ubiquinol-cytochrome c oxidoreductase (cytochrome b-c1 complex, complex III, CIII) and cytochrome c oxidase (complex IV, CIV), that cooperate to transfer electrons derived from NADH and succinate to molecular oxygen, creating an electrochemical gradient over the inner membrane that drives transmembrane transport and the ATP synthase. Cytochrome c oxidase is the component of the respiratory chain that catalyzes the reduction of oxygen to water. Electrons originating from reduced cytochrome c in the intermembrane space (IMS) are transferred via the dinuclear copper A center (CU(A)) of subunit 2 and heme A of subunit 1 to the active site in subunit 1, a binuclear center (BNC) formed by heme A3 and copper B (CU(B)). The BNC reduces molecular oxygen to 2 water molecules using 4 electrons from cytochrome c in the IMS and 4 protons from the mitochondrial matrix. The chain is Cytochrome c oxidase subunit 2 (MT-CO2) from Symphalangus syndactylus (Siamang).